The chain runs to 223 residues: Endonuclease V (223 aa).

Positions 35 and 103 each coordinate Mg(2+).

It belongs to the endonuclease V family. Requires Mg(2+) as cofactor.

It localises to the cytoplasm. The enzyme catalyses Endonucleolytic cleavage at apurinic or apyrimidinic sites to products with a 5'-phosphate.. DNA repair enzyme involved in the repair of deaminated bases. Selectively cleaves double-stranded DNA at the second phosphodiester bond 3' to a deoxyinosine leaving behind the intact lesion on the nicked DNA. In Klebsiella pneumoniae subsp. pneumoniae (strain ATCC 700721 / MGH 78578), this protein is Endonuclease V.